We begin with the raw amino-acid sequence, 258 residues long: Imidazole glycerol phosphate synthase subunit HisF (258 aa).

Residues Asp-11 and Asp-130 contribute to the active site.

The protein belongs to the HisA/HisF family. Heterodimer of HisH and HisF.

The protein resides in the cytoplasm. The enzyme catalyses 5-[(5-phospho-1-deoxy-D-ribulos-1-ylimino)methylamino]-1-(5-phospho-beta-D-ribosyl)imidazole-4-carboxamide + L-glutamine = D-erythro-1-(imidazol-4-yl)glycerol 3-phosphate + 5-amino-1-(5-phospho-beta-D-ribosyl)imidazole-4-carboxamide + L-glutamate + H(+). The protein operates within amino-acid biosynthesis; L-histidine biosynthesis; L-histidine from 5-phospho-alpha-D-ribose 1-diphosphate: step 5/9. In terms of biological role, IGPS catalyzes the conversion of PRFAR and glutamine to IGP, AICAR and glutamate. The HisF subunit catalyzes the cyclization activity that produces IGP and AICAR from PRFAR using the ammonia provided by the HisH subunit. This Photorhabdus laumondii subsp. laumondii (strain DSM 15139 / CIP 105565 / TT01) (Photorhabdus luminescens subsp. laumondii) protein is Imidazole glycerol phosphate synthase subunit HisF.